The sequence spans 305 residues: Glycine--tRNA ligase alpha subunit (305 aa).

Belongs to the class-II aminoacyl-tRNA synthetase family. In terms of assembly, tetramer of two alpha and two beta subunits.

The protein localises to the cytoplasm. The catalysed reaction is tRNA(Gly) + glycine + ATP = glycyl-tRNA(Gly) + AMP + diphosphate. This Streptococcus sanguinis (strain SK36) protein is Glycine--tRNA ligase alpha subunit.